We begin with the raw amino-acid sequence, 127 residues long: Large ribosomal subunit protein bL17 (127 aa).

This sequence belongs to the bacterial ribosomal protein bL17 family. Part of the 50S ribosomal subunit. Contacts protein L32.

In Leuconostoc citreum (strain KM20), this protein is Large ribosomal subunit protein bL17.